Reading from the N-terminus, the 360-residue chain is Peptide chain release factor 1 (360 aa).

Gln237 bears the N5-methylglutamine mark.

This sequence belongs to the prokaryotic/mitochondrial release factor family. Methylated by PrmC. Methylation increases the termination efficiency of RF1.

Its subcellular location is the cytoplasm. Its function is as follows. Peptide chain release factor 1 directs the termination of translation in response to the peptide chain termination codons UAG and UAA. This chain is Peptide chain release factor 1, found in Cellvibrio japonicus (strain Ueda107) (Pseudomonas fluorescens subsp. cellulosa).